Consider the following 132-residue polypeptide: Ribosome-binding factor A (132 aa).

It belongs to the RbfA family. In terms of assembly, monomer. Binds 30S ribosomal subunits, but not 50S ribosomal subunits or 70S ribosomes.

The protein localises to the cytoplasm. Its function is as follows. One of several proteins that assist in the late maturation steps of the functional core of the 30S ribosomal subunit. Associates with free 30S ribosomal subunits (but not with 30S subunits that are part of 70S ribosomes or polysomes). Required for efficient processing of 16S rRNA. May interact with the 5'-terminal helix region of 16S rRNA. The sequence is that of Ribosome-binding factor A from Pectobacterium atrosepticum (strain SCRI 1043 / ATCC BAA-672) (Erwinia carotovora subsp. atroseptica).